A 248-amino-acid polypeptide reads, in one-letter code: UDP-N-acetyl-D-mannosaminuronic acid transferase (248 aa).

The protein belongs to the glycosyltransferase 26 family.

It carries out the reaction UDP-N-acetyl-alpha-D-mannosaminouronate + N-acetyl-alpha-D-glucosaminyl-di-trans,octa-cis-undecaprenyl diphosphate = beta-D-ManNAcA-(1-&gt;4)-alpha-D-GlcNAc-di-trans,octa-cis-undecaprenyl diphosphate + UDP + H(+). It participates in bacterial outer membrane biogenesis; enterobacterial common antigen biosynthesis. Catalyzes the synthesis of Und-PP-GlcNAc-ManNAcA (Lipid II), the second lipid-linked intermediate involved in enterobacterial common antigen (ECA) synthesis. This Klebsiella pneumoniae subsp. pneumoniae (strain ATCC 700721 / MGH 78578) protein is UDP-N-acetyl-D-mannosaminuronic acid transferase.